The primary structure comprises 891 residues: Valine--tRNA ligase (891 aa).

Residues 43–53 carry the 'HIGH' region motif; sequence PFTSGTLHLGH. The 'KMSKS' region signature appears at 536-540; sequence KMSKS. Lysine 539 serves as a coordination point for ATP.

It belongs to the class-I aminoacyl-tRNA synthetase family. ValS type 2 subfamily.

Its subcellular location is the cytoplasm. It catalyses the reaction tRNA(Val) + L-valine + ATP = L-valyl-tRNA(Val) + AMP + diphosphate. Functionally, catalyzes the attachment of valine to tRNA(Val). As ValRS can inadvertently accommodate and process structurally similar amino acids such as threonine, to avoid such errors, it has a 'posttransfer' editing activity that hydrolyzes mischarged Thr-tRNA(Val) in a tRNA-dependent manner. This is Valine--tRNA ligase from Pyrococcus horikoshii (strain ATCC 700860 / DSM 12428 / JCM 9974 / NBRC 100139 / OT-3).